Reading from the N-terminus, the 366-residue chain is Fructose-bisphosphate aldolase 1 (366 aa).

The substrate site is built by Arg56 and Lys147. Residue Glu189 is the Proton acceptor of the active site. The active-site Schiff-base intermediate with dihydroxyacetone-P is the Lys231.

Belongs to the class I fructose-bisphosphate aldolase family. Ubiquitous.

It catalyses the reaction beta-D-fructose 1,6-bisphosphate = D-glyceraldehyde 3-phosphate + dihydroxyacetone phosphate. Its pathway is carbohydrate degradation; glycolysis; D-glyceraldehyde 3-phosphate and glycerone phosphate from D-glucose: step 4/4. Functionally, may be involved in the metabolism of fructose-bisphosphate (beta-D-fructose 1,6-bisphosphate) and of fructose 1-phosphate. In Caenorhabditis elegans, this protein is Fructose-bisphosphate aldolase 1 (aldo-1).